The primary structure comprises 184 residues: Large ribosomal subunit protein uL5c (184 aa).

Belongs to the universal ribosomal protein uL5 family. As to quaternary structure, part of the 50S ribosomal subunit; contacts the 5S rRNA.

The protein localises to the plastid. It localises to the chloroplast. Functionally, binds 5S rRNA, forms part of the central protuberance of the 50S subunit. This Mesostigma viride (Green alga) protein is Large ribosomal subunit protein uL5c (rpl5).